We begin with the raw amino-acid sequence, 264 residues long: Tryptophan synthase alpha chain (264 aa).

Active-site proton acceptor residues include Glu45 and Asp56.

The protein belongs to the TrpA family. In terms of assembly, tetramer of two alpha and two beta chains.

The enzyme catalyses (1S,2R)-1-C-(indol-3-yl)glycerol 3-phosphate + L-serine = D-glyceraldehyde 3-phosphate + L-tryptophan + H2O. The protein operates within amino-acid biosynthesis; L-tryptophan biosynthesis; L-tryptophan from chorismate: step 5/5. Functionally, the alpha subunit is responsible for the aldol cleavage of indoleglycerol phosphate to indole and glyceraldehyde 3-phosphate. The polypeptide is Tryptophan synthase alpha chain (Leptospira interrogans serogroup Icterohaemorrhagiae serovar copenhageni (strain Fiocruz L1-130)).